Here is a 532-residue protein sequence, read N- to C-terminus: MISKNTSFCGFLILVLATCMSAQFVSNESIKLHDILKPSATHRLFDTLQYSVEEQYSDSHLSFDVSTIYNYSEKPISIGKLNKKYRDILFEGDMAISYKQLSMIVNGSTEYRKAIKSRRRGNKINGESTDRTKRQAYLDNNYPATIWKNGVAFMFHESLTPIAKTAILKAVHFWYRETCIEFHPRTFQKEYLLFIGNDDGCWSTVGRDASQGKQVVSIGNGCEHFGVTSHELAHALGIFHEQSRFDRDESVVFNPRVVERDLLFNFAKISPRQMSTYGLPYDIGSVMHYTPTEFSNIPSIPTLAAIDTNLQQTMGQLEGPSFVDVHIMNQHYQCQEKCPTQAPCQNGGFTNSRNCKVCKCPTGFGGAYCQLIASSFSPFCGGYLNAEETTRRFDITIRQSTTTRSKTCVYHIKAPEGKRIIIDILKIDSKCIEGCWQDGLELKMKKDFRPVGYRFCCPESSRRKVISEGNMVPFMVFSKEHDFSVSFEYSFVSTSAGFDDEKNDSDVIVDNLDGVFVSDTSLLQRIGFRRQL.

The first 22 residues, 1–22 (MISKNTSFCGFLILVLATCMSA), serve as a signal peptide directing secretion. Asn5, Asn27, Asn70, and Asn106 each carry an N-linked (GlcNAc...) asparagine glycan. Residues 23 to 134 (QFVSNESIKL…NGESTDRTKR (112 aa)) constitute a propeptide that is removed on maturation. Residues 135 to 335 (QAYLDNNYPA…HIMNQHYQCQ (201 aa)) enclose the Peptidase M12A domain. 6 disulfides stabilise this stretch: Cys179-Cys334, Cys201-Cys222, Cys338-Cys358, Cys360-Cys369, Cys380-Cys408, and Cys435-Cys456. A Zn(2+)-binding site is contributed by His230. The active site involves Glu231. The Zn(2+) site is built by His234 and His240. The EGF-like domain occupies 330-370 (QHYQCQEKCPTQAPCQNGGFTNSRNCKVCKCPTGFGGAYCQ). The CUB domain occupies 380 to 494 (CGGYLNAEET…VSFEYSFVST (115 aa)). Asn503 carries N-linked (GlcNAc...) asparagine glycosylation.

Zn(2+) serves as cofactor.

Its subcellular location is the secreted. Its function is as follows. Metalloprotease. In Caenorhabditis elegans, this protein is Zinc metalloproteinase nas-29 (nas-29).